The chain runs to 796 residues: Protocadherin beta-3 (796 aa).

The signal sequence occupies residues 1–26 (MEAGGERFLRQRQVLLLFVFLGGSLA). Residues 27-690 (GSESRRYSVA…AQADLLTVYL (664 aa)) lie on the Extracellular side of the membrane. Cadherin domains are found at residues 35-133 (VAEE…SPVF), 138-242 (MHLK…APEF), 247-347 (YEVA…PPEL), 352-451 (VNSP…APAF), and 456-561 (YTLF…SPFV). N-linked (GlcNAc...) asparagine glycosylation is present at Asn169. N-linked (GlcNAc...) asparagine glycosylation is found at Asn418 and Asn436. The N-linked (GlcNAc...) asparagine glycan is linked to Asn567. Residues 568 to 671 (GSAPCTELVP…LVDGFSQPYL (104 aa)) enclose the Cadherin 6 domain. The helical transmembrane segment at 691–711 (VVALASVSSLFLFSVLLFVAV) threads the bilayer. At 712–796 (RLCRRSRAAS…PSFRKSFEFS (85 aa)) the chain is on the cytoplasmic side.

The protein localises to the cell membrane. Potential calcium-dependent cell-adhesion protein. May be involved in the establishment and maintenance of specific neuronal connections in the brain. This Homo sapiens (Human) protein is Protocadherin beta-3 (PCDHB3).